Consider the following 150-residue polypeptide: 1,4-dihydroxy-2-naphthoyl-CoA hydrolase (150 aa).

D19 is an active-site residue.

The protein belongs to the 4-hydroxybenzoyl-CoA thioesterase family. DHNA-CoA hydrolase subfamily.

It carries out the reaction 1,4-dihydroxy-2-naphthoyl-CoA + H2O = 1,4-dihydroxy-2-naphthoate + CoA + H(+). It participates in cofactor biosynthesis; phylloquinone biosynthesis. It functions in the pathway quinol/quinone metabolism; 1,4-dihydroxy-2-naphthoate biosynthesis; 1,4-dihydroxy-2-naphthoate from chorismate: step 7/7. In terms of biological role, catalyzes the hydrolysis of 1,4-dihydroxy-2-naphthoyl-CoA (DHNA-CoA) to 1,4-dihydroxy-2-naphthoate (DHNA), a reaction involved in phylloquinone (vitamin K1) biosynthesis. The sequence is that of 1,4-dihydroxy-2-naphthoyl-CoA hydrolase from Prochlorococcus marinus (strain MIT 9515).